The sequence spans 181 residues: Acireductone dioxygenase (181 aa).

The segment covering 1–10 (MRAYIYDEES) has biased composition (acidic residues). The interval 1–23 (MRAYIYDEESQLSPQDEHESSQS) is disordered. Fe(2+) is bound by residues His-82, His-84, Glu-88, and His-128. Positions 82, 84, 88, and 128 each coordinate Ni(2+).

Belongs to the acireductone dioxygenase (ARD) family. It depends on Fe(2+) as a cofactor. Ni(2+) serves as cofactor.

Its subcellular location is the cytoplasm. It localises to the nucleus. The catalysed reaction is 1,2-dihydroxy-5-(methylsulfanyl)pent-1-en-3-one + O2 = 4-methylsulfanyl-2-oxobutanoate + formate + 2 H(+). It carries out the reaction 1,2-dihydroxy-5-(methylsulfanyl)pent-1-en-3-one + O2 = 3-(methylsulfanyl)propanoate + CO + formate + 2 H(+). It functions in the pathway amino-acid biosynthesis; L-methionine biosynthesis via salvage pathway; L-methionine from S-methyl-5-thio-alpha-D-ribose 1-phosphate: step 5/6. Its function is as follows. Catalyzes 2 different reactions between oxygen and the acireductone 1,2-dihydroxy-3-keto-5-methylthiopentene (DHK-MTPene) depending upon the metal bound in the active site. Fe-containing acireductone dioxygenase (Fe-ARD) produces formate and 2-keto-4-methylthiobutyrate (KMTB), the alpha-ketoacid precursor of methionine in the methionine recycle pathway. Ni-containing acireductone dioxygenase (Ni-ARD) produces methylthiopropionate, carbon monoxide and formate, and does not lie on the methionine recycle pathway. This chain is Acireductone dioxygenase, found in Puccinia graminis f. sp. tritici (strain CRL 75-36-700-3 / race SCCL) (Black stem rust fungus).